Here is a 250-residue protein sequence, read N- to C-terminus: 5-oxoprolinase subunit A (250 aa).

The protein belongs to the LamB/PxpA family. In terms of assembly, forms a complex composed of PxpA, PxpB and PxpC.

The enzyme catalyses 5-oxo-L-proline + ATP + 2 H2O = L-glutamate + ADP + phosphate + H(+). In terms of biological role, catalyzes the cleavage of 5-oxoproline to form L-glutamate coupled to the hydrolysis of ATP to ADP and inorganic phosphate. This chain is 5-oxoprolinase subunit A, found in Pseudomonas fluorescens (strain Pf0-1).